The following is a 316-amino-acid chain: 4-hydroxy-3-methylbut-2-enyl diphosphate reductase (316 aa).

Residue C12 participates in [4Fe-4S] cluster binding. H43 and H81 together coordinate (2E)-4-hydroxy-3-methylbut-2-enyl diphosphate. Positions 43 and 81 each coordinate dimethylallyl diphosphate. The isopentenyl diphosphate site is built by H43 and H81. C103 contributes to the [4Fe-4S] cluster binding site. H131 serves as a coordination point for (2E)-4-hydroxy-3-methylbut-2-enyl diphosphate. Position 131 (H131) interacts with dimethylallyl diphosphate. An isopentenyl diphosphate-binding site is contributed by H131. The active-site Proton donor is the E133. T170 lines the (2E)-4-hydroxy-3-methylbut-2-enyl diphosphate pocket. Position 198 (C198) interacts with [4Fe-4S] cluster. S226, N228, and S271 together coordinate (2E)-4-hydroxy-3-methylbut-2-enyl diphosphate. Dimethylallyl diphosphate is bound by residues S226, N228, and S271. Isopentenyl diphosphate-binding residues include S226, N228, and S271.

The protein belongs to the IspH family. The cofactor is [4Fe-4S] cluster.

It carries out the reaction isopentenyl diphosphate + 2 oxidized [2Fe-2S]-[ferredoxin] + H2O = (2E)-4-hydroxy-3-methylbut-2-enyl diphosphate + 2 reduced [2Fe-2S]-[ferredoxin] + 2 H(+). The catalysed reaction is dimethylallyl diphosphate + 2 oxidized [2Fe-2S]-[ferredoxin] + H2O = (2E)-4-hydroxy-3-methylbut-2-enyl diphosphate + 2 reduced [2Fe-2S]-[ferredoxin] + 2 H(+). It participates in isoprenoid biosynthesis; dimethylallyl diphosphate biosynthesis; dimethylallyl diphosphate from (2E)-4-hydroxy-3-methylbutenyl diphosphate: step 1/1. The protein operates within isoprenoid biosynthesis; isopentenyl diphosphate biosynthesis via DXP pathway; isopentenyl diphosphate from 1-deoxy-D-xylulose 5-phosphate: step 6/6. Functionally, catalyzes the conversion of 1-hydroxy-2-methyl-2-(E)-butenyl 4-diphosphate (HMBPP) into a mixture of isopentenyl diphosphate (IPP) and dimethylallyl diphosphate (DMAPP). Acts in the terminal step of the DOXP/MEP pathway for isoprenoid precursor biosynthesis. The polypeptide is 4-hydroxy-3-methylbut-2-enyl diphosphate reductase (Geobacillus thermodenitrificans (strain NG80-2)).